An 838-amino-acid polypeptide reads, in one-letter code: Adenylate cyclase (838 aa).

Residues 1–541 (MNYDLFSAQK…DLRLSFPVTV (541 aa)) form a catalytic region. The segment at 547–838 (EDLTHACEIR…VPFHSRLAMS (292 aa)) is regulatory.

This sequence belongs to the adenylyl cyclase class-1 family.

Its subcellular location is the cytoplasm. The enzyme catalyses ATP = 3',5'-cyclic AMP + diphosphate. The sequence is that of Adenylate cyclase (cya) from Pasteurella multocida (strain Pm70).